The following is a 207-amino-acid chain: Ribonuclease HII (207 aa).

In terms of domain architecture, RNase H type-2 spans 10-199; it reads RLIAGVDEVG…VRNALLDAEL (190 aa). A divalent metal cation-binding residues include D16, E17, and D108.

It belongs to the RNase HII family. It depends on Mn(2+) as a cofactor. Requires Mg(2+) as cofactor.

Its subcellular location is the cytoplasm. It catalyses the reaction Endonucleolytic cleavage to 5'-phosphomonoester.. Endonuclease that specifically degrades the RNA of RNA-DNA hybrids. The sequence is that of Ribonuclease HII from Erwinia tasmaniensis (strain DSM 17950 / CFBP 7177 / CIP 109463 / NCPPB 4357 / Et1/99).